The chain runs to 222 residues: Uracil-DNA glycosylase (222 aa).

Aspartate 66 acts as the Proton acceptor in catalysis.

Belongs to the uracil-DNA glycosylase (UDG) superfamily. UNG family.

Its subcellular location is the cytoplasm. It catalyses the reaction Hydrolyzes single-stranded DNA or mismatched double-stranded DNA and polynucleotides, releasing free uracil.. In terms of biological role, excises uracil residues from the DNA which can arise as a result of misincorporation of dUMP residues by DNA polymerase or due to deamination of cytosine. The polypeptide is Uracil-DNA glycosylase (Porphyromonas gingivalis (strain ATCC BAA-308 / W83)).